The sequence spans 149 residues: L-alanine exporter AlaE (149 aa).

The next 4 membrane-spanning stretches (helical) occupy residues 17 to 37 (FAMV…ISGM), 43 to 63 (LASR…YGVF), 86 to 106 (LTAY…TVGA), and 111 to 131 (IITA…FYGY).

The protein belongs to the AlaE exporter family.

Its subcellular location is the cell inner membrane. In terms of biological role, exports L-alanine. This is L-alanine exporter AlaE from Aliivibrio salmonicida (strain LFI1238) (Vibrio salmonicida (strain LFI1238)).